Consider the following 419-residue polypeptide: Serine hydroxymethyltransferase (419 aa).

Residues Leu121 and 125-127 (GHL) each bind (6S)-5,6,7,8-tetrahydrofolate. At Lys230 the chain carries N6-(pyridoxal phosphate)lysine.

Belongs to the SHMT family. In terms of assembly, homodimer. Requires pyridoxal 5'-phosphate as cofactor.

The protein localises to the cytoplasm. The enzyme catalyses (6R)-5,10-methylene-5,6,7,8-tetrahydrofolate + glycine + H2O = (6S)-5,6,7,8-tetrahydrofolate + L-serine. It participates in one-carbon metabolism; tetrahydrofolate interconversion. The protein operates within amino-acid biosynthesis; glycine biosynthesis; glycine from L-serine: step 1/1. Functionally, catalyzes the reversible interconversion of serine and glycine with tetrahydrofolate (THF) serving as the one-carbon carrier. This reaction serves as the major source of one-carbon groups required for the biosynthesis of purines, thymidylate, methionine, and other important biomolecules. Also exhibits THF-independent aldolase activity toward beta-hydroxyamino acids, producing glycine and aldehydes, via a retro-aldol mechanism. The polypeptide is Serine hydroxymethyltransferase (Vesicomyosocius okutanii subsp. Calyptogena okutanii (strain HA)).